Consider the following 491-residue polypeptide: Probable glycine dehydrogenase (decarboxylating) subunit 2 (491 aa).

Residue Lys273 is modified to N6-(pyridoxal phosphate)lysine.

This sequence belongs to the GcvP family. C-terminal subunit subfamily. As to quaternary structure, the glycine cleavage system is composed of four proteins: P, T, L and H. In this organism, the P 'protein' is a heterodimer of two subunits. Pyridoxal 5'-phosphate is required as a cofactor.

It carries out the reaction N(6)-[(R)-lipoyl]-L-lysyl-[glycine-cleavage complex H protein] + glycine + H(+) = N(6)-[(R)-S(8)-aminomethyldihydrolipoyl]-L-lysyl-[glycine-cleavage complex H protein] + CO2. Functionally, the glycine cleavage system catalyzes the degradation of glycine. The P protein binds the alpha-amino group of glycine through its pyridoxal phosphate cofactor; CO(2) is released and the remaining methylamine moiety is then transferred to the lipoamide cofactor of the H protein. The protein is Probable glycine dehydrogenase (decarboxylating) subunit 2 of Bacillus thuringiensis (strain Al Hakam).